A 340-amino-acid chain; its full sequence is Heat-inducible transcription repressor HrcA (340 aa).

Belongs to the HrcA family.

In terms of biological role, negative regulator of class I heat shock genes (grpE-dnaK-dnaJ and groELS operons). Prevents heat-shock induction of these operons. This is Heat-inducible transcription repressor HrcA from Burkholderia mallei (strain NCTC 10247).